Here is a 274-residue protein sequence, read N- to C-terminus: D-aminopeptidase (274 aa).

Residues D8, E10, H60, and H104 each contribute to the Zn(2+) site. Catalysis depends on H115, which acts as the Nucleophile. Zn(2+) is bound at residue E133.

It belongs to the peptidase M55 family. In terms of assembly, homodecamer. A 20 Angstroms wide channel runs through the complex, giving access to a central chamber holding the active sites. It depends on Zn(2+) as a cofactor.

Hydrolyzes N-terminal residues in D-amino acid containing peptides. Among the tested substrates, the highest activities are with D-Ala-D-Ala and D-Ala-Gly-Gly. The physiological role is not clear. The protein is D-aminopeptidase (dppA) of Bacillus subtilis (strain 168).